Consider the following 65-residue polypeptide: Large ribosomal subunit protein bL33 (65 aa).

Residues 17-40 (SRSVPSSEKRSAGVSRYTTEKNRR) are disordered.

It belongs to the bacterial ribosomal protein bL33 family.

The sequence is that of Large ribosomal subunit protein bL33 from Prochlorococcus marinus (strain NATL1A).